Here is a 362-residue protein sequence, read N- to C-terminus: Chorismate synthase (362 aa).

Residues R48 and R54 each coordinate NADP(+). FMN is bound by residues 131-133 (RSS), 243-244 (NA), G287, 302-306 (KPTSS), and R328.

This sequence belongs to the chorismate synthase family. As to quaternary structure, homotetramer. The cofactor is FMNH2.

It catalyses the reaction 5-O-(1-carboxyvinyl)-3-phosphoshikimate = chorismate + phosphate. Its pathway is metabolic intermediate biosynthesis; chorismate biosynthesis; chorismate from D-erythrose 4-phosphate and phosphoenolpyruvate: step 7/7. In terms of biological role, catalyzes the anti-1,4-elimination of the C-3 phosphate and the C-6 proR hydrogen from 5-enolpyruvylshikimate-3-phosphate (EPSP) to yield chorismate, which is the branch point compound that serves as the starting substrate for the three terminal pathways of aromatic amino acid biosynthesis. This reaction introduces a second double bond into the aromatic ring system. The protein is Chorismate synthase of Rhodopseudomonas palustris (strain ATCC BAA-98 / CGA009).